The sequence spans 475 residues: Bifunctional protein HldE (475 aa).

The ribokinase stretch occupies residues 1 to 321 (MADKIDISLY…RALHQITASH (321 aa)). 197–200 (NLKE) serves as a coordination point for ATP. Residue Asp-266 is part of the active site. Positions 346-475 (MTNGCFDILH…TSRLVEKMLN (130 aa)) are cytidylyltransferase.

It in the N-terminal section; belongs to the carbohydrate kinase PfkB family. The protein in the C-terminal section; belongs to the cytidylyltransferase family. Homodimer.

It catalyses the reaction D-glycero-beta-D-manno-heptose 7-phosphate + ATP = D-glycero-beta-D-manno-heptose 1,7-bisphosphate + ADP + H(+). The enzyme catalyses D-glycero-beta-D-manno-heptose 1-phosphate + ATP + H(+) = ADP-D-glycero-beta-D-manno-heptose + diphosphate. It participates in nucleotide-sugar biosynthesis; ADP-L-glycero-beta-D-manno-heptose biosynthesis; ADP-L-glycero-beta-D-manno-heptose from D-glycero-beta-D-manno-heptose 7-phosphate: step 1/4. It functions in the pathway nucleotide-sugar biosynthesis; ADP-L-glycero-beta-D-manno-heptose biosynthesis; ADP-L-glycero-beta-D-manno-heptose from D-glycero-beta-D-manno-heptose 7-phosphate: step 3/4. Catalyzes the phosphorylation of D-glycero-D-manno-heptose 7-phosphate at the C-1 position to selectively form D-glycero-beta-D-manno-heptose-1,7-bisphosphate. In terms of biological role, catalyzes the ADP transfer from ATP to D-glycero-beta-D-manno-heptose 1-phosphate, yielding ADP-D-glycero-beta-D-manno-heptose. This is Bifunctional protein HldE from Coxiella burnetii (strain Dugway 5J108-111).